The sequence spans 304 residues: Coenzyme PQQ synthesis protein B (304 aa).

This sequence belongs to the PqqB family.

Its pathway is cofactor biosynthesis; pyrroloquinoline quinone biosynthesis. Functionally, may be involved in the transport of PQQ or its precursor to the periplasm. The sequence is that of Coenzyme PQQ synthesis protein B from Azoarcus sp. (strain BH72).